Consider the following 176-residue polypeptide: MTEAHNACCHPSGTAAGHHGAGKASTDMMDAVDRRLLDIIQTGFPIEPRPYAVLGETLGITECEALARVRALRERKVIRRLGANFDSWKLGFRSTLCAAKVPEDRIDAFVAEVNRHVNVTHNYLRNHEYNIWFTCICPSWEQVCSLLDGITERTGIPILNLPATKLYKIRVDFRMD.

The segment at 1 to 24 (MTEAHNACCHPSGTAAGHHGAGKA) is disordered. A compositionally biased stretch (low complexity) spans 12–24 (SGTAAGHHGAGKA).

Belongs to the Ahb/Nir family. In terms of assembly, forms a heterodimer composed of AhbA and AhbB. Also forms heterotetramers.

The catalysed reaction is siroheme + 2 H(+) = 12,18-didecarboxysiroheme + 2 CO2. The protein operates within porphyrin-containing compound metabolism; protoheme biosynthesis. Involved in siroheme-dependent heme b biosynthesis. Catalyzes the decarboxylation of siroheme into didecarboxysiroheme. The chain is Siroheme decarboxylase alpha subunit from Nitratidesulfovibrio vulgaris (strain ATCC 29579 / DSM 644 / CCUG 34227 / NCIMB 8303 / VKM B-1760 / Hildenborough) (Desulfovibrio vulgaris).